Consider the following 262-residue polypeptide: Ribosomal RNA small subunit methyltransferase A (262 aa).

The S-adenosyl-L-methionine site is built by His-16, Leu-18, Gly-43, Glu-64, Asp-89, and Asn-109.

It belongs to the class I-like SAM-binding methyltransferase superfamily. rRNA adenine N(6)-methyltransferase family. RsmA subfamily.

Its subcellular location is the cytoplasm. It catalyses the reaction adenosine(1518)/adenosine(1519) in 16S rRNA + 4 S-adenosyl-L-methionine = N(6)-dimethyladenosine(1518)/N(6)-dimethyladenosine(1519) in 16S rRNA + 4 S-adenosyl-L-homocysteine + 4 H(+). Its function is as follows. Specifically dimethylates two adjacent adenosines (A1518 and A1519) in the loop of a conserved hairpin near the 3'-end of 16S rRNA in the 30S particle. May play a critical role in biogenesis of 30S subunits. This is Ribosomal RNA small subunit methyltransferase A from Xanthomonas euvesicatoria pv. vesicatoria (strain 85-10) (Xanthomonas campestris pv. vesicatoria).